Reading from the N-terminus, the 185-residue chain is Ribosome-recycling factor (185 aa).

Belongs to the RRF family.

The protein localises to the cytoplasm. Responsible for the release of ribosomes from messenger RNA at the termination of protein biosynthesis. May increase the efficiency of translation by recycling ribosomes from one round of translation to another. The polypeptide is Ribosome-recycling factor (Aromatoleum aromaticum (strain DSM 19018 / LMG 30748 / EbN1) (Azoarcus sp. (strain EbN1))).